We begin with the raw amino-acid sequence, 469 residues long: GDP-fucose protein O-fucosyltransferase 2 (469 aa).

Positions 1-18 are cleaved as a signal peptide; sequence MKFIIVLLLFFFFKVIDR. GDP-beta-L-fucose is bound by residues 56 to 60, 277 to 279, and 373 to 374; these read GEGFN, HLR, and RF. The active-site Proton acceptor is the Glu-57.

Belongs to the glycosyltransferase 68 family.

The protein resides in the endoplasmic reticulum. It catalyses the reaction L-seryl-[protein] + GDP-beta-L-fucose = 3-O-(alpha-L-fucosyl)-L-seryl-[protein] + GDP + H(+). It carries out the reaction L-threonyl-[protein] + GDP-beta-L-fucose = 3-O-(alpha-L-fucosyl)-L-threonyl-[protein] + GDP + H(+). It functions in the pathway protein modification; protein glycosylation. Functionally, catalyzes the reaction that attaches fucose through an O-glycosidic linkage to a conserved serine or threonine residue in the consensus sequence C1-X-X-S/T-C2 of thrombospondin type I repeats (TSRs) where C1 and C2 are the first and second cysteines of the repeat, respectively. O-fucosylates sporozoite proteins CSP and TRAP. O-fucosylation regulates stability and intracellular trafficking of TRAP but not of CSP. Probably by regulating protein O-fucosylation, may play a role in parasite transmission to the mosquito vector and/or infection of the vertebrate host hepatocytes; however, POFUT2 involvement in transmission/infection is controversial. This Plasmodium falciparum (isolate NF54) protein is GDP-fucose protein O-fucosyltransferase 2.